A 231-amino-acid chain; its full sequence is Ribonuclease 3 (231 aa).

The region spanning alanine 6–glycine 135 is the RNase III domain. Glutamate 48 provides a ligand contact to Mg(2+). Aspartate 52 is an active-site residue. Residues aspartate 121 and glutamate 124 each contribute to the Mg(2+) site. Residue glutamate 124 is part of the active site. The DRBM domain maps to aspartate 161–glutamine 230. The segment at tryptophan 209–lysine 231 is disordered. Over residues alanine 220–lysine 231 the composition is skewed to polar residues.

Belongs to the ribonuclease III family. As to quaternary structure, homodimer. Mg(2+) is required as a cofactor.

It localises to the cytoplasm. It carries out the reaction Endonucleolytic cleavage to 5'-phosphomonoester.. Functionally, digests double-stranded RNA. Involved in the processing of primary rRNA transcript to yield the immediate precursors to the large and small rRNAs (23S and 16S). Processes some mRNAs, and tRNAs when they are encoded in the rRNA operon. Processes pre-crRNA and tracrRNA of type II CRISPR loci if present in the organism. The protein is Ribonuclease 3 of Lactiplantibacillus plantarum (strain ATCC BAA-793 / NCIMB 8826 / WCFS1) (Lactobacillus plantarum).